The sequence spans 497 residues: Bypass of stop codon protein 6 (497 aa).

Residues 1 to 72 (MDASSVPPKV…KVKTYPLNYQ (72 aa)) are Lumenal-facing. A phosphoserine mark is found at S37 and S41. A glycan (N-linked (GlcNAc...) asparagine) is linked at N49. Residues 73–93 (TVPLVKLQVIACLIMFVVFGM) form a helical membrane-spanning segment. The Cytoplasmic segment spans residues 94 to 144 (NDQTVGALLPTLIEYYHISRVDVSNVFIVQLCGYVMASLSKERLNKHFGMR). Residues 145–165 (GGMLLAAGLCIVFLIILATAP) traverse the membrane as a helical segment. Topologically, residues 166-167 (SS) are lumenal. A helical membrane pass occupies residues 168-188 (FYVCMFCGLPLGLGIGILDST). Residues 189 to 205 (GNVLMGSLLVHKNELMG) are Cytoplasmic-facing. A helical membrane pass occupies residues 206–226 (IMHGLYGAAAMVTPPLVSYFV). Residues 227–232 (EWGHWS) are Lumenal-facing. A helical membrane pass occupies residues 233-253 (LFFLIPLFFSIIGMIVIFPAF). The Cytoplasmic segment spans residues 254-300 (KFETASKYDYLCSVENKESNNDVEEAGDNSLMESTKASPGFFELLRN). The chain crosses the membrane as a helical span at residues 301-321 (PAIFLYSLYLFLYLGAEITTG). Over 322-340 (SWFFSYLLETKSSNKVAMS) the chain is Lumenal. The chain crosses the membrane as a helical span at residues 341-361 (YIAASFWTGLTVGRLCLGFVT). At 362–373 (ERFFENEYKASK) the chain is on the cytoplasmic side. A helical transmembrane segment spans residues 374–394 (AYAFLTLSSYTLFVLVGLINS). Topologically, residues 395-397 (SSV) are lumenal. The helical transmembrane segment at 398–418 (FYFVVLFFVVFCCGTFIGPLF) threads the bilayer. Residues 419–439 (PNASIVALQVLPKRLHVSGVG) lie on the Cytoplasmic side of the membrane. The chain crosses the membrane as a helical span at residues 440–460 (VAVAVGGCGGAAIPYLAGVIA). Topologically, residues 461 to 462 (HT) are lumenal. The helical transmembrane segment at 463–483 (VGIQYIPLLCWIMVALFTLEW) threads the bilayer. Topologically, residues 484–497 (TLYPKFIKGHEEYF) are cytoplasmic.

Belongs to the major facilitator superfamily.

It is found in the golgi apparatus. The protein resides in the cis-Golgi network membrane. Its function is as follows. Probable transporter. This chain is Bypass of stop codon protein 6 (BSC6), found in Saccharomyces cerevisiae (strain ATCC 204508 / S288c) (Baker's yeast).